Consider the following 375-residue polypeptide: WAT1-related protein At1g70260 (375 aa).

The next 10 helical transmembrane spans lie at 10 to 30 (LVPF…TIMA), 41 to 61 (FVFV…FSFL), 72 to 92 (IFSW…IFMF), 106 to 126 (IVVC…SIIL), 143 to 163 (MGTI…GPFI), 191 to 211 (WFLG…FNVV), 225 to 245 (VASF…LFME), 259 to 278 (LYLI…SVHV), 289 to 309 (VPLF…SFFV), and 312 to 332 (LHYG…TVSW). Residues 25 to 134 (ALTIMAKTAL…ILGRSKLDWR (110 aa)) form the EamA domain. The segment at 337-356 (ESEEKQSSNEERKSIKTIHH) is disordered.

Belongs to the drug/metabolite transporter (DMT) superfamily. Plant drug/metabolite exporter (P-DME) (TC 2.A.7.4) family.

The protein resides in the membrane. The chain is WAT1-related protein At1g70260 from Arabidopsis thaliana (Mouse-ear cress).